The chain runs to 271 residues: MPSPTIDPAIRARLSQEALKGMSFLEHLEELRRRIIWTFVYIAAGFGVCWWWHEQIYDFMQRPIMKALAANHLDQKLVYLNPTEPFNMYLKMAFIAGLFVASPFVLYQVWLFIAPGLYKRERRYVLPFMFSTVLLFLGGGVFGYYMVYPNALTFLIGYSHQFSPMITISEYTDLFLTIILGLGIVFEMPILVFFLALMGIVSAGWMWRNLRYSILVIFVIAAIITPTTDIMNMCVFAAPMILLYILSIGVAFLVHPKNRRKRREAQEAQEG.

The next 6 helical transmembrane spans lie at 35–55 (IIWT…WHEQ), 93–113 (AFIA…WLFI), 124–144 (YVLP…VFGY), 178–198 (IILG…LALM), 213–233 (SILV…IMNM), and 234–254 (CVFA…AFLV).

It belongs to the TatC family. In terms of assembly, forms a complex with TatA.

It localises to the cell inner membrane. In terms of biological role, part of the twin-arginine translocation (Tat) system that transports large folded proteins containing a characteristic twin-arginine motif in their signal peptide across membranes. This chain is Sec-independent protein translocase protein TatC, found in Koribacter versatilis (strain Ellin345).